Reading from the N-terminus, the 59-residue chain is Venom protein 37.1 (59 aa).

The signal sequence occupies residues 1-18 (MVSTLMIASVKLRLYCTA).

Belongs to the non-disulfide-bridged peptide (NDBP) superfamily. Long chain multifunctional peptide (group 2) family. As to expression, expressed by the venom gland.

It is found in the secreted. In Lychas mucronatus (Chinese swimming scorpion), this protein is Venom protein 37.1.